Consider the following 227-residue polypeptide: Acyl-protein thioesterase 1 (227 aa).

Active-site charge relay system residues include serine 119, aspartate 173, and histidine 207.

The protein belongs to the AB hydrolase superfamily. AB hydrolase 2 family.

The protein localises to the cytoplasm. The protein resides in the nucleus. The enzyme catalyses S-hexadecanoyl-L-cysteinyl-[protein] + H2O = L-cysteinyl-[protein] + hexadecanoate + H(+). Its function is as follows. Hydrolyzes fatty acids from S-acylated cysteine residues in proteins with a strong preference for palmitoylated G-alpha proteins over other acyl substrates. Mediates the deacylation of G-alpha proteins such as GPA1 in vivo, but has weak or no activity toward palmitoylated Ras proteins. Has weak lysophospholipase activity in vitro; however such activity may not exist in vivo. The chain is Acyl-protein thioesterase 1 from Yarrowia lipolytica (strain CLIB 122 / E 150) (Yeast).